The primary structure comprises 505 residues: Deoxyguanosinetriphosphate triphosphohydrolase (505 aa).

Residues 66 to 273 (RLTHSMEVQQ…MEAADDISYC (208 aa)) enclose the HD domain.

This sequence belongs to the dGTPase family. Type 1 subfamily. Homotetramer. It depends on Mg(2+) as a cofactor.

The enzyme catalyses dGTP + H2O = 2'-deoxyguanosine + triphosphate + H(+). DGTPase preferentially hydrolyzes dGTP over the other canonical NTPs. The protein is Deoxyguanosinetriphosphate triphosphohydrolase of Salmonella choleraesuis (strain SC-B67).